The sequence spans 330 residues: Aspartate--ammonia ligase (330 aa).

This sequence belongs to the class-II aminoacyl-tRNA synthetase family. AsnA subfamily.

It localises to the cytoplasm. It carries out the reaction L-aspartate + NH4(+) + ATP = L-asparagine + AMP + diphosphate + H(+). It participates in amino-acid biosynthesis; L-asparagine biosynthesis; L-asparagine from L-aspartate (ammonia route): step 1/1. The protein is Aspartate--ammonia ligase of Streptococcus pyogenes serotype M1.